The following is a 300-amino-acid chain: ADP,ATP carrier protein 2 (300 aa).

3 Solcar repeats span residues 8-100 (VAFI…YKQV), 113-203 (RYFI…ARGM), and 214-299 (VSWA…IKKV). The next 5 helical transmembrane spans lie at 10–39 (FIKD…LLLQ), 77–101 (LANV…KQVF), 112–132 (TRYF…SLCF), 181–201 (VSVQ…DTAR), and 213–233 (YVSW…SYPF). ADP-binding residues include arginine 82 and lysine 94. Arginine 237 serves as a coordination point for ADP. Residues 237 to 242 (RRRMMM) form an important for transport activity region. The short motif at 237–242 (RRRMMM) is the Nucleotide carrier signature motif element. Residues 276–293 (AFSNVLRGTGGAFVLVLY) traverse the membrane as a helical segment.

It belongs to the mitochondrial carrier (TC 2.A.29) family. As to quaternary structure, monomer.

It localises to the mitochondrion inner membrane. It catalyses the reaction ADP(in) + ATP(out) = ADP(out) + ATP(in). Its activity is regulated as follows. The matrix-open state (m-state) is inhibited by the membrane-permeable bongkrekic acid (BKA). The cytoplasmic-open state (c-state) is inhibited by the membrane-impermeable toxic inhibitor carboxyatractyloside (CATR). Its function is as follows. ADP:ATP antiporter that mediates import of ADP into the mitochondrial matrix for ATP synthesis, and export of ATP out to fuel the cell. Cycles between the cytoplasmic-open state (c-state) and the matrix-open state (m-state): operates by the alternating access mechanism with a single substrate-binding site intermittently exposed to either the cytosolic (c-state) or matrix (m-state) side of the inner mitochondrial membrane. The chain is ADP,ATP carrier protein 2 from Anopheles gambiae (African malaria mosquito).